The sequence spans 196 residues: Nodulation protein A (196 aa).

This sequence belongs to the NodA family.

The protein resides in the cytoplasm. N-acyltransferase required for nodulation. Acts in the production of a small, heat-stable compound (Nod) that stimulates mitosis in various plant protoplasts. The protein is Nodulation protein A of Mesorhizobium plurifarium.